Consider the following 246-residue polypeptide: MLQNIRIVLVETSHTGNMGSVARAMKTMGLTNLWLVNPLVKPDSQAIALAAGASDVIGNAHIVDTLDEALAGCSLVVGTSARSRTLPWPILDPRECGLKSVAEAANTPVALVFGRERVGLTNEELQKCHYHVAIAANPEYSSLNLAMAVQVIAYEVRMAWLATQENGEQVEHEETPYPLVDDLERFYGHLEQTLLATGFIRENHPGQVMNKLRRLFTRARPESQELNILRGILASIEQQNKGNKAE.

S-adenosyl-L-methionine contacts are provided by residues T79 to A81, G114, I134, and S141 to L143.

It belongs to the class IV-like SAM-binding methyltransferase superfamily. RNA methyltransferase TrmH family. As to quaternary structure, homodimer.

Its subcellular location is the cytoplasm. The catalysed reaction is cytidine(32) in tRNA + S-adenosyl-L-methionine = 2'-O-methylcytidine(32) in tRNA + S-adenosyl-L-homocysteine + H(+). The enzyme catalyses uridine(32) in tRNA + S-adenosyl-L-methionine = 2'-O-methyluridine(32) in tRNA + S-adenosyl-L-homocysteine + H(+). Functionally, catalyzes the formation of 2'O-methylated cytidine (Cm32) or 2'O-methylated uridine (Um32) at position 32 in tRNA. The polypeptide is tRNA (cytidine/uridine-2'-O-)-methyltransferase TrmJ (trmJ) (Escherichia coli O6:K15:H31 (strain 536 / UPEC)).